The primary structure comprises 387 residues: 3-ketoacyl-CoA thiolase (387 aa).

The Acyl-thioester intermediate role is filled by Cys-91. Catalysis depends on proton acceptor residues His-343 and Cys-373.

Belongs to the thiolase-like superfamily. Thiolase family. Heterotetramer of two alpha chains (FadB) and two beta chains (FadA).

The protein resides in the cytoplasm. It carries out the reaction an acyl-CoA + acetyl-CoA = a 3-oxoacyl-CoA + CoA. Its pathway is lipid metabolism; fatty acid beta-oxidation. Functionally, catalyzes the final step of fatty acid oxidation in which acetyl-CoA is released and the CoA ester of a fatty acid two carbons shorter is formed. The sequence is that of 3-ketoacyl-CoA thiolase from Enterobacter sp. (strain 638).